Reading from the N-terminus, the 300-residue chain is HTH-type transcriptional regulator ArgP (300 aa).

The HTH lysR-type domain maps to 4 to 60 (FDYKLLAALAAVVEQGGFERAAQALGLSQSAVSQRIKLLEARVGQPVLVRETPPHPT). Positions 21–40 (FERAAQALGLSQSAVSQRIK) form a DNA-binding region, H-T-H motif.

Belongs to the LysR transcriptional regulatory family. Homodimer.

In terms of biological role, controls the transcription of genes involved in arginine and lysine metabolism. The chain is HTH-type transcriptional regulator ArgP from Pseudomonas aeruginosa (strain UCBPP-PA14).